Reading from the N-terminus, the 100-residue chain is Virion membrane protein OPG135 (100 aa).

Positions M1–G22 are cleaved as a signal peptide. Residues A23–W45 are Intravirion-facing. A helical membrane pass occupies residues F46 to L66. Residues Y67–S83 are Virion surface-facing. A disordered region spans residues K75–K100. N-linked (GlcNAc...) asparagine; by host glycans are attached at residues N79, N89, and N96.

It belongs to the chordopoxvirinae A9 family.

Its subcellular location is the virion membrane. It is found in the host cytoplasm. In terms of biological role, envelope protein. Required for an early step in virion morphogenesis. This is Virion membrane protein OPG135 (OPG135) from Monkeypox virus.